Here is a 477-residue protein sequence, read N- to C-terminus: Probable ribonuclease FAU-1 (477 aa).

This sequence belongs to the FAU-1 family.

Probable RNase involved in rRNA stability through maturation and/or degradation of precursor rRNAs. Binds to RNA in loop regions with AU-rich sequences. The polypeptide is Probable ribonuclease FAU-1 (Staphylothermus marinus (strain ATCC 43588 / DSM 3639 / JCM 9404 / F1)).